The chain runs to 571 residues: La-related protein 7 (571 aa).

M1 bears the N-acetylmethionine mark. Positions 1–17 (METENQKTMEESTEKRK) are enriched in basic and acidic residues. Disordered regions lie at residues 1 to 25 (METE…KRSR) and 181 to 366 (LNNP…ERHK). The region spanning 23–117 (RSRVKQVLAD…KPLGERPKDE (95 aa)) is the HTH La-type RNA-binding domain. The RRM domain maps to 120–198 (RTVYVELLPK…PRKPGIFPKT (79 aa)). Residues 214 to 223 (KKKKKKKGRI) are compositionally biased toward basic residues. K232 is covalently cross-linked (Glycyl lysine isopeptide (Lys-Gly) (interchain with G-Cter in SUMO2)). T252 bears the Phosphothreonine mark. Phosphoserine is present on residues S254 and S257. T261 is subject to Phosphothreonine. The segment covering 287 to 296 (KAGKRERSSA) has biased composition (basic and acidic residues). Phosphoserine is present on residues S294, S295, and S335. Phosphothreonine is present on T336. Basic and acidic residues predominate over residues 342–351 (PGDRKGDSLS). The residue at position 349 (S349) is a Phosphoserine. The segment covering 352–365 (KGKRKHKKKHKERH) has biased composition (basic residues). K408 participates in a covalent cross-link: Glycyl lysine isopeptide (Lys-Gly) (interchain with G-Cter in SUMO2). Positions 411 to 432 (SEMETESKAPPGSGQQCSTQEK) are disordered. Residues 423 to 432 (SGQQCSTQEK) show a composition bias toward polar residues. One can recognise a xRRM domain in the interval 439–552 (QFVTGVIVKI…TEKLITKAEK (114 aa)).

This sequence belongs to the LARP7 family. As to quaternary structure, core component of the 7SK RNP complex, at least composed of 7SK RNA, LARP7, MEPCE, HEXIM1 (or HEXIM2) and P-TEFb (composed of CDK9 and CCNT1/cyclin-T1). Interacts with METTL16. Interacts with RBM7; upon genotoxic stress this interaction is enhanced, triggering the release of inactive P-TEFb complex from the core, yielding to P-TEFb complex activation. Associates with box C/D small nucleolar ribonucleoprotein (snoRNP) complexes.

The protein resides in the nucleus. The protein localises to the nucleoplasm. RNA-binding protein that specifically binds distinct small nuclear RNA (snRNAs) and regulates their processing and function. Specifically binds the 7SK snRNA (7SK RNA) and acts as a core component of the 7SK ribonucleoprotein (RNP) complex, thereby acting as a negative regulator of transcription elongation by RNA polymerase II. The 7SK RNP complex sequesters the positive transcription elongation factor b (P-TEFb) in a large inactive 7SK RNP complex preventing RNA polymerase II phosphorylation and subsequent transcriptional elongation. The 7SK RNP complex also promotes snRNA gene transcription by RNA polymerase II via interaction with the little elongation complex (LEC). LARP7 specifically binds to the highly conserved 3'-terminal U-rich stretch of 7SK RNA; on stimulation, remains associated with 7SK RNA, whereas P-TEFb is released from the complex. LARP7 also acts as a regulator of mRNA splicing fidelity by promoting U6 snRNA processing. Specifically binds U6 snRNAs and associates with a subset of box C/D RNP complexes: promotes U6 snRNA 2'-O-methylation by facilitating U6 snRNA loading into box C/D RNP complexes. U6 snRNA 2'-O-methylation is required for mRNA splicing fidelity. Binds U6 snRNAs with a 5'-CAGGG-3' sequence motif. U6 snRNA processing is required for spermatogenesis. This Rattus norvegicus (Rat) protein is La-related protein 7.